A 476-amino-acid polypeptide reads, in one-letter code: Beta-amyrin 28-monooxygenase (476 aa).

The chain crosses the membrane as a helical span at residues 2–22 (ELLYVCLVCVFVFLVSLLLLY). Cys-421 is a binding site for heme.

Belongs to the cytochrome P450 family. It depends on heme as a cofactor. As to expression, specifically expressed in roots.

The protein resides in the membrane. The catalysed reaction is beta-amyrin + 3 reduced [NADPH--hemoprotein reductase] + 3 O2 = oleanolate + 3 oxidized [NADPH--hemoprotein reductase] + 4 H2O + 4 H(+). Its function is as follows. Catalyzes the carboxylation of beta-amyrin at the C-28 position to form oleanolate. Catalyzes the carboxylation of alpha-amyrin at the C-28 position to form ursolate. In Solanum lycopersicum (Tomato), this protein is Beta-amyrin 28-monooxygenase (CYP716A44).